We begin with the raw amino-acid sequence, 445 residues long: ATP-dependent protease ATPase subunit HslU (445 aa).

Residues Ile17, 59-64 (GVGKTE), Asp254, Glu319, and Arg391 each bind ATP.

The protein belongs to the ClpX chaperone family. HslU subfamily. In terms of assembly, a double ring-shaped homohexamer of HslV is capped on each side by a ring-shaped HslU homohexamer. The assembly of the HslU/HslV complex is dependent on binding of ATP.

It is found in the cytoplasm. Functionally, ATPase subunit of a proteasome-like degradation complex; this subunit has chaperone activity. The binding of ATP and its subsequent hydrolysis by HslU are essential for unfolding of protein substrates subsequently hydrolyzed by HslV. HslU recognizes the N-terminal part of its protein substrates and unfolds these before they are guided to HslV for hydrolysis. This Pseudomonas syringae pv. tomato (strain ATCC BAA-871 / DC3000) protein is ATP-dependent protease ATPase subunit HslU.